The sequence spans 628 residues: Probable potassium transport system protein Kup (628 aa).

12 helical membrane-spanning segments follow: residues 15 to 35 (FAAE…SPLY), 49 to 69 (FLGG…ILSV), 106 to 126 (WYLL…GVLT), 141 to 161 (ISPE…LAVF), 174 to 194 (FFGP…VYGI), 210 to 230 (IMLM…CFLA), 254 to 274 (LFVA…ILLV), 295 to 315 (LLFL…TGVF), 343 to 363 (IYVG…VLGF), 369 to 389 (LASA…ILFI), 398 to 418 (WPAP…FAFA), and 425 to 445 (IHDG…VMVS).

This sequence belongs to the HAK/KUP transporter (TC 2.A.72) family.

It localises to the cell inner membrane. It carries out the reaction K(+)(in) + H(+)(in) = K(+)(out) + H(+)(out). In terms of biological role, transport of potassium into the cell. Likely operates as a K(+):H(+) symporter. The protein is Probable potassium transport system protein Kup of Xanthobacter autotrophicus (strain ATCC BAA-1158 / Py2).